Consider the following 266-residue polypeptide: Protein phosphatase 1 regulatory subunit 35 (266 aa).

The span at 1–10 shows a compositional bias: polar residues; it reads MMVYNGSQLE. The disordered stretch occupies residues 1–118; that stretch reads MMVYNGSQLE…QDLGTPVQQS (118 aa). Residues 21-38 show a composition bias toward pro residues; sequence PGPPPEPRAPEPGAPVPE. Residues Ser-46 and Ser-51 each carry the phosphoserine modification. The span at 62 to 79 shows a compositional bias: basic residues; sequence GRRKGRADRRGGARKGRQ. Over residues 86 to 97 the composition is skewed to pro residues; sequence PPSPVRSGPPPA.

The protein belongs to the PPP1R35 family. Interacts with PPP1CA; this interaction mediates the PPP1CA phosphatase activity inhibition. Interacts with RTTN; this interaction allows the mutual recruitment to the centriole.

It is found in the cytoplasm. The protein localises to the cytoskeleton. Its subcellular location is the microtubule organizing center. The protein resides in the centrosome. It localises to the centriole. Its function is as follows. During centriole duplication, plays a role in the centriole elongation by promoting the recruitment of the microtubule-binding elongation machinery through its interaction with RTTN, leading to the centriole to centrosome conversion. In addition may play a role in the primary cilia assembly. The sequence is that of Protein phosphatase 1 regulatory subunit 35 from Bos taurus (Bovine).